The following is a 104-amino-acid chain: Thioredoxin (104 aa).

Residues 2–104 enclose the Thioredoxin domain; it reads AIVKVTDADF…NLAEVLDKHL (103 aa). Cysteines 29 and 32 form a disulfide.

This sequence belongs to the thioredoxin family.

Its function is as follows. Component of the thioredoxin-thioredoxin reductase system. Participates in various redox reactions through the reversible oxidation of its active center dithiol to a disulfide and catalyzes dithiol-disulfide exchange reactions. This is Thioredoxin (trxA) from Staphylococcus aureus (strain N315).